Here is a 418-residue protein sequence, read N- to C-terminus: Putative ion-transport protein YfeO (418 aa).

Helical transmembrane passes span 10 to 30 (LLLS…LIVV), 54 to 74 (DSPL…GLVI), 99 to 119 (ALPG…SLGP), 120 to 140 (EHPI…RLLP), 149 to 169 (ILAS…AALI), 186 to 206 (LFAP…FFHP), 223 to 243 (ILSG…AVWC), 258 to 278 (VLVL…GGPV), 300 to 320 (DYFL…ASGF), 322 to 342 (GGRI…LHEH), 343 to 363 (VPAV…VLVV), and 371 to 391 (LFMA…CIVM).

Belongs to the chloride channel (TC 2.A.49) family.

It localises to the cell membrane. The polypeptide is Putative ion-transport protein YfeO (Escherichia coli O9:H4 (strain HS)).